The sequence spans 349 residues: MHRNFRKWIFYVFLCFGVIYVKLGALSSVVALGANIICNKIPGLAPRQRAICQSRPDAIIVIGEGAQMGINECQYQFRYGRWNCSALGEKTVFGQELRVGSREAAFTYAITAAGVAHAVTAACSQGNLSNCGCDREKQGYYNQEEGWKWGGCSADIRYGIEFSRRFVDAREIKKNARRLMNLHNNEAGRKVLEERMKLECKCHGVSGSCTTKTCWTTLPKFREIGYILKEKYNAAVQVEVVRASRLRQPTFLKIKQIKSYQKPMETDLVYIEKSPNYCEEDASTGSVGTQGRLCNRTSPNADGCDMMCCGRGYNTHQYTKVWQCNCKFHWCCFVKCNTCSERTEVFTCK.

A signal peptide spans 1 to 24 (MHRNFRKWIFYVFLCFGVIYVKLG). Cystine bridges form between Cys73–Cys84, Cys123–Cys131, Cys133–Cys152, Cys200–Cys214, and Cys202–Cys209. Asn83 and Asn127 each carry an N-linked (GlcNAc...) asparagine glycan. The O-palmitoleoyl serine; by PORCN moiety is linked to residue Ser206. A disordered linker region spans residues 238–266 (VEVVRASRLRQPTFLKIKQIKSYQKPMET). Intrachain disulfides connect Cys278-Cys309, Cys294-Cys304, Cys308-Cys348, Cys324-Cys339, Cys326-Cys336, and Cys331-Cys332. N-linked (GlcNAc...) asparagine glycosylation occurs at Asn295.

This sequence belongs to the Wnt family. Palmitoleoylation is required for efficient binding to frizzled receptors. Depalmitoleoylation leads to Wnt signaling pathway inhibition. In terms of tissue distribution, expressed in differentiating lens fiber cells.

The protein resides in the secreted. It is found in the extracellular space. It localises to the extracellular matrix. In terms of biological role, ligand for members of the frizzled family of seven transmembrane receptors that functions in the canonical Wnt/beta-catenin signaling pathway. Required for normal fusion of the chorion and the allantois during placenta development. Required for central nervous system (CNS) angiogenesis and blood-brain barrier regulation. This chain is Protein Wnt-7b (WNT7B), found in Gallus gallus (Chicken).